A 1151-amino-acid polypeptide reads, in one-letter code: SCF E3 ubiquitin ligase complex F-box protein GRR1 (1151 aa).

Over residues 1–18 (MDQDNNNHNDSNRLHPPD) the composition is skewed to basic and acidic residues. The tract at residues 1–72 (MDQDNNNHND…ATSERNASEV (72 aa)) is disordered. The segment covering 38–49 (NNNNNNNNNNNN) has biased composition (low complexity). A compositionally biased stretch (basic and acidic residues) spans 58–72 (RTRETATSERNASEV). Residues Ser-199 and Ser-300 each carry the phosphoserine modification. The F-box domain occupies 314–361 (VFALNMLPSEILHLILDKLNQKYDIVKFLTVSKLWAEIIVKILYYRPH). LRR repeat units lie at residues 399–423 (GDYM…TLVF), 424–449 (CKHI…DITG), 450–475 (IRDV…YVPQ), 476–501 (ARNV…KITA), 502–527 (NNNM…DITL), 528–553 (SPNV…RITH), 554–582 (NTNI…DLSG), 583–608 (CENI…FLGK), 609–634 (CSRI…HFGH), 635–660 (CFNI…DFAC), 661–685 (CTNL…GLVK), 686–714 (CTQM…HLSY), and 715–740 (CSNL…SLTA). Positions 1066 to 1080 (AGANDTSNNETNNGN) are enriched in low complexity. 2 disordered regions span residues 1066–1090 (AGAN…NPNF) and 1118–1151 (VRNN…EDML).

Interacts with SKP1. Component of the probable SCF(GRR1) complex containing CDC53, SKP1, RBX1 and GRR1.

It localises to the membrane. The protein operates within protein modification; protein ubiquitination. Substrate recognition component of a SCF (SKP1-CUL1-F-box protein) E3 ubiquitin-protein ligase complex which mediates the ubiquitination and subsequent proteasomal degradation of target proteins. Recognizes and directs ubiquitination of phosphorylated CLN1, CLN2 and GIC2. Probably constitutes the primary response element required for the generation or interpretation of the signal that induces glucose repression. This is SCF E3 ubiquitin ligase complex F-box protein GRR1 (GRR1) from Saccharomyces cerevisiae (strain ATCC 204508 / S288c) (Baker's yeast).